The primary structure comprises 234 residues: Cytochrome b (234 aa).

4 helical membrane-spanning segments follow: residues 33–53 (FGSLLGLCLMIQILTGLFLAM), 77–98 (WLIRYLHANGASMFFICLYMHV), 113–133 (WNIGIILLFAVMATAFMGYVL), and 178–198 (FFAFHFILPFIIAALVMIHLL). Heme b-binding residues include His83 and His97. His182 and His196 together coordinate heme b. Position 201 (His201) interacts with a ubiquinone. A helical transmembrane segment spans residues 226–234 (IKDLLGFLV).

This sequence belongs to the cytochrome b family. The cytochrome bc1 complex contains 11 subunits: 3 respiratory subunits (MT-CYB, CYC1 and UQCRFS1), 2 core proteins (UQCRC1 and UQCRC2) and 6 low-molecular weight proteins (UQCRH/QCR6, UQCRB/QCR7, UQCRQ/QCR8, UQCR10/QCR9, UQCR11/QCR10 and a cleavage product of UQCRFS1). This cytochrome bc1 complex then forms a dimer. Requires heme b as cofactor.

Its subcellular location is the mitochondrion inner membrane. In terms of biological role, component of the ubiquinol-cytochrome c reductase complex (complex III or cytochrome b-c1 complex) that is part of the mitochondrial respiratory chain. The b-c1 complex mediates electron transfer from ubiquinol to cytochrome c. Contributes to the generation of a proton gradient across the mitochondrial membrane that is then used for ATP synthesis. The protein is Cytochrome b (MT-CYB) of Lepus arcticus (Arctic hare).